The sequence spans 570 residues: Interleukin-1 receptor accessory protein (570 aa).

An N-terminal signal peptide occupies residues 1-20 (MGLLWYLMSLSFYGILQSHA). Ig-like C2-type domains follow at residues 21-128 (SERC…VAFP), 139-230 (NSAM…RTVT), and 243-348 (PQIY…AKVK). The Extracellular segment spans residues 21–367 (SERCDDWGLD…VELACGFGAT (347 aa)). 5 cysteine pairs are disulfide-bonded: cysteine 24/cysteine 122, cysteine 47/cysteine 114, cysteine 137/cysteine 181, cysteine 160/cysteine 212, and cysteine 266/cysteine 332. N-linked (GlcNAc...) asparagine glycosylation occurs at asparagine 57. The segment at 69 to 85 (IWYWTRQDRDLEEPINF) is essential for interaction with PTPRD. N-linked (GlcNAc...) asparagine glycans are attached at residues asparagine 107, asparagine 111, and asparagine 118. Asparagine 196, asparagine 209, and asparagine 299 each carry an N-linked (GlcNAc...) asparagine glycan. A helical membrane pass occupies residues 368 to 388 (VFLVVVLIVVYHVYWLEMVLF). Topologically, residues 389-570 (YRAHFGTDET…GLSYSSLKNV (182 aa)) are cytoplasmic. The TIR domain occupies 403 to 546 (KEYDIYVSYA…RFWKQLQVAM (144 aa)). Glutamate 482 is an active-site residue. Positions 550-570 (KSPRWSSNDKQGLSYSSLKNV) are disordered. The segment covering 553–570 (RWSSNDKQGLSYSSLKNV) has biased composition (polar residues).

Belongs to the interleukin-1 receptor family. As to quaternary structure, the interleukin-36 receptor complex is a heterodimer of IL1RL2 and IL1RAP; the association is inhibited by IL36RN. The interleukin-1 receptor complex is a heterodimer of IL1R1 and IL1RAP. Associates with IL1R2 to form a non-signaling interleukin-1 receptor complex. Interacts with IL-33-bound IL1RL1 to form the minimal interleukin-33 signaling complex with a 1:1:1 stoichiometry. Interacts with KIT (independently of stimulation with KITLG/SCF). A mast cell-specific KITLG/SCF-induced interleukin-33 signaling complex contains IL1RL1, IL1RAP, KIT and MYD88. Interacts (via the first immunoglobilin domain) with PTPRD (via the third immunoglobilin domain); induces pre- and postsynaptic differentiation of neurons. In terms of tissue distribution, detected in lung, brain, spleen, thymus and liver. Expressed in brain endothelial cells, astrocytes, microglia and neurons. Isoform 3 is predominantly expressed in brain; expressed in hippocampal neurons.

The protein localises to the cell membrane. It localises to the secreted. It catalyses the reaction NAD(+) + H2O = ADP-D-ribose + nicotinamide + H(+). Coreceptor for IL1RL2 in the IL-36 signaling system. Coreceptor with IL1R1 in the IL-1 signaling system. Associates with IL1R1 bound to IL1B to form the high affinity interleukin-1 receptor complex which mediates interleukin-1-dependent activation of NF-kappa-B and other pathways. Signaling involves the recruitment of adapter molecules such as TOLLIP, MYD88, and IRAK1 or IRAK2 via the respective TIR domains of the receptor/coreceptor subunits. Recruits TOLLIP to the signaling complex. Does not bind to interleukin-1 alone; binding of IL1RN to IL1R1, prevents its association with IL1R1 to form a signaling complex. The cellular response is modulated through a non-signaling association with the membrane IL1R2 decoy receptor. Secreted forms (isoforms 2 and 3) associate with secreted ligand-bound IL1R2 and increase the affinity of secreted IL1R2 for IL1B; this complex formation may be the dominant mechanism for neutralization of IL1B by secreted/soluble receptors. Coreceptor for IL1RL1 in the IL-33 signaling system. Can bidirectionally induce pre- and postsynaptic differentiation of neurons by trans-synaptically binding to PTPRD. May play a role in IL1B-mediated costimulation of IFNG production from T-helper 1 (Th1) cells. In terms of biological role, associates with secreted ligand-bound IL1R2 and increases the affinity of secreted IL1R2 for IL1B; this complex formation may be the dominant mechanism for neutralization of IL1B by secreted/soluble receptors. Enhances the ability of secreted IL1R1 to inhibit IL-33 signaling. Functionally, required for Src phosphorylation by IL1B. Required for IL1B-potentiated NMDA-induced calcium influx in neurons acting in cooperation with IL1R1 isoform 2 to mediate Akt kinase activation. In Mus musculus (Mouse), this protein is Interleukin-1 receptor accessory protein (Il1rap).